The following is a 199-amino-acid chain: ATP-dependent Clp protease proteolytic subunit (199 aa).

S97 serves as the catalytic Nucleophile. The active site involves H122.

This sequence belongs to the peptidase S14 family. In terms of assembly, fourteen ClpP subunits assemble into 2 heptameric rings which stack back to back to give a disk-like structure with a central cavity, resembling the structure of eukaryotic proteasomes.

It is found in the cytoplasm. It carries out the reaction Hydrolysis of proteins to small peptides in the presence of ATP and magnesium. alpha-casein is the usual test substrate. In the absence of ATP, only oligopeptides shorter than five residues are hydrolyzed (such as succinyl-Leu-Tyr-|-NHMec, and Leu-Tyr-Leu-|-Tyr-Trp, in which cleavage of the -Tyr-|-Leu- and -Tyr-|-Trp bonds also occurs).. Its function is as follows. Cleaves peptides in various proteins in a process that requires ATP hydrolysis. Has a chymotrypsin-like activity. Plays a major role in the degradation of misfolded proteins. The chain is ATP-dependent Clp protease proteolytic subunit from Pelobacter propionicus (strain DSM 2379 / NBRC 103807 / OttBd1).